Here is a 214-residue protein sequence, read N- to C-terminus: Small ribosomal subunit protein eS6 (214 aa).

It belongs to the eukaryotic ribosomal protein eS6 family.

The chain is Small ribosomal subunit protein eS6 (rps6e) from Saccharolobus islandicus (strain Y.G.57.14 / Yellowstone #1) (Sulfolobus islandicus).